The following is a 312-amino-acid chain: Olfactory receptor 13J1 (312 aa).

Residues 1–25 (MEPLNRTEVSEFFLKGFSGYPALEH) lie on the Extracellular side of the membrane. The N-linked (GlcNAc...) asparagine glycan is linked to N5. A helical membrane pass occupies residues 26 to 46 (LLFPLCSAMYLVTLLGNTAIM). Residues 47–54 (AVSVLDIH) are Cytoplasmic-facing. Residues 55 to 75 (LHTPVYFFLGNLSTLDICYTP) traverse the membrane as a helical segment. Over 76-99 (TFVPLMLVHLLSSRKTISFAVCAI) the chain is Extracellular. A disulfide bond links C97 and C189. A helical transmembrane segment spans residues 100–120 (QMCLSLSTGSTECLLLAITAY). The Cytoplasmic segment spans residues 121 to 139 (DRYLAICQPLRYHVLMSHR). Residues 140–160 (LCVLLMGAAWVLCLLKSVTEM) traverse the membrane as a helical segment. The Extracellular segment spans residues 161 to 197 (VISMRLPFCGHHVVSHFTCKILAVLKLACGNTSVSED). N-linked (GlcNAc...) asparagine glycosylation occurs at N191. The chain crosses the membrane as a helical span at residues 198–217 (FLLAGSILLLPVPLAFICLS). Over 218 to 237 (YLLILATILRVPSAARCCKA) the chain is Cytoplasmic. A helical membrane pass occupies residues 238 to 258 (FSTCLAHLAVVLLFYGTIIFM). Topologically, residues 259–271 (YLKPKSKEAHISD) are extracellular. A helical transmembrane segment spans residues 272–292 (EVFTVLYAMVTTMLNPTIYSL). Over 293 to 312 (RNKEVKEAARKVWGRSRASR) the chain is Cytoplasmic.

The protein belongs to the G-protein coupled receptor 1 family.

It localises to the cell membrane. Its function is as follows. Odorant receptor. In Homo sapiens (Human), this protein is Olfactory receptor 13J1 (OR13J1).